A 199-amino-acid chain; its full sequence is Recombination protein RecR (199 aa).

A C4-type zinc finger spans residues 56 to 71; that stretch reads CQQCNNYTEQTLCALC. A Toprim domain is found at 79-174; sequence TLLCVVESPA…NISQLAHGIP (96 aa).

The protein belongs to the RecR family.

Its function is as follows. May play a role in DNA repair. It seems to be involved in an RecBC-independent recombinational process of DNA repair. It may act with RecF and RecO. The sequence is that of Recombination protein RecR from Legionella pneumophila subsp. pneumophila (strain Philadelphia 1 / ATCC 33152 / DSM 7513).